We begin with the raw amino-acid sequence, 336 residues long: Isopentenyl-diphosphate delta-isomerase (336 aa).

5-6 (RK) is a binding site for substrate. FMN-binding positions include 60 to 62 (AMT), S90, and N117. Q147 serves as a coordination point for substrate. E148 provides a ligand contact to Mg(2+). FMN contacts are provided by residues K179, S204, T209, 253–255 (GVR), and 274–275 (SR).

It belongs to the IPP isomerase type 2 family. As to quaternary structure, homooctamer. Dimer of tetramers. FMN serves as cofactor. It depends on NADPH as a cofactor. Requires Mg(2+) as cofactor.

Its subcellular location is the cytoplasm. The enzyme catalyses isopentenyl diphosphate = dimethylallyl diphosphate. Its function is as follows. Involved in the biosynthesis of isoprenoids. Catalyzes the 1,3-allylic rearrangement of the homoallylic substrate isopentenyl (IPP) to its allylic isomer, dimethylallyl diphosphate (DMAPP). In Streptococcus pneumoniae (strain ATCC BAA-255 / R6), this protein is Isopentenyl-diphosphate delta-isomerase.